The sequence spans 211 residues: N-(5'-phosphoribosyl)anthranilate isomerase (211 aa).

This sequence belongs to the TrpF family.

The catalysed reaction is N-(5-phospho-beta-D-ribosyl)anthranilate = 1-(2-carboxyphenylamino)-1-deoxy-D-ribulose 5-phosphate. It functions in the pathway amino-acid biosynthesis; L-tryptophan biosynthesis; L-tryptophan from chorismate: step 3/5. This is N-(5'-phosphoribosyl)anthranilate isomerase from Pseudomonas aeruginosa (strain UCBPP-PA14).